Consider the following 709-residue polypeptide: Elongation factor G (709 aa).

The tr-type G domain maps to 8-297 (ANTRNIGIMA…AVIDYLPSPL (290 aa)). Residues 17–24 (AHVDAGKT), 81–85 (DTPGH), and 135–138 (NKMD) contribute to the GTP site.

The protein belongs to the TRAFAC class translation factor GTPase superfamily. Classic translation factor GTPase family. EF-G/EF-2 subfamily.

Its subcellular location is the cytoplasm. Catalyzes the GTP-dependent ribosomal translocation step during translation elongation. During this step, the ribosome changes from the pre-translocational (PRE) to the post-translocational (POST) state as the newly formed A-site-bound peptidyl-tRNA and P-site-bound deacylated tRNA move to the P and E sites, respectively. Catalyzes the coordinated movement of the two tRNA molecules, the mRNA and conformational changes in the ribosome. The protein is Elongation factor G of Lactococcus lactis subsp. cremoris (strain MG1363).